The chain runs to 701 residues: MSEKATGEVEAELPEHPDADERRRWQELADEVREHQFRYYVKDAPIISDAEFDKLLRELQALEDAHPELRTPDSPTQLVGGAGFATEFAPAEHLERMLSLDNVFDSDELTAWAARISSETGDAAHFLCELKIDGVALSLVYRDGRLERGATRGDGRTGEDVTLNARTIDDIPERLTPSDEFPVPAVLEVRGEVFFRVADFEELNAGLVAEGKPPFANPRNSAAGSLRQKNPAVTARRKLRMICHGIGYTEGFTPASLHDAYRALGAWGLPVSEHTTKVSTVAEVAERIAYWGEHRHDVEHEIDGVVVKVDEVALQRRLGATSRAPRWAVAYKYPPEEATTKLLDIRVNVGRTGRVTPFAYMEPVKVAGSTVGLATLHNASEVKRKGVLIGDTVVIRKAGDVIPEVLGPVVDLRDGTEREFEFPTHCPECGTELAPAKEGDADIRCPNSRSCPAQLRERLFHLAGRGAFDIEGLGYEAATALLAAQVIPDEGDLFTLTADDLLRTELFTTKKGELSANGKRLLANLTKAKEQPLWRVLVALSIRHVGPTAARALATEFGSLEAIEAASEEELAAVEGVGPTIAAAVKDWFTVDWHRAIVDKWRAAGVRMADERDASIERTLEGLSIVVTGSLAGFSRDQAKEAIIARGGKAAGSVSKKTAYVVAGDAPGSKYDKAVELGVPVLDEDGFRRLLEQGPPVEPAE.

A disordered region spans residues 1 to 23 (MSEKATGEVEAELPEHPDADERR). Residues 49 to 53 (DAEFD), 99 to 100 (SL), and Glu-129 each bind NAD(+). The N6-AMP-lysine intermediate role is filled by Lys-131. Arg-152, Glu-192, Lys-308, and Lys-332 together coordinate NAD(+). The Zn(2+) site is built by Cys-426, Cys-429, Cys-445, and Cys-451. Positions 615–701 (SIERTLEGLS…EQGPPVEPAE (87 aa)) constitute a BRCT domain.

The protein belongs to the NAD-dependent DNA ligase family. LigA subfamily. Requires Mg(2+) as cofactor. Mn(2+) is required as a cofactor.

It catalyses the reaction NAD(+) + (deoxyribonucleotide)n-3'-hydroxyl + 5'-phospho-(deoxyribonucleotide)m = (deoxyribonucleotide)n+m + AMP + beta-nicotinamide D-nucleotide.. Functionally, DNA ligase that catalyzes the formation of phosphodiester linkages between 5'-phosphoryl and 3'-hydroxyl groups in double-stranded DNA using NAD as a coenzyme and as the energy source for the reaction. It is essential for DNA replication and repair of damaged DNA. Probably the only ligase required for non-homologous end joining (NHEJ) repair of 3-overhangs. This chain is DNA ligase A, found in Mycolicibacterium smegmatis (strain ATCC 700084 / mc(2)155) (Mycobacterium smegmatis).